We begin with the raw amino-acid sequence, 410 residues long: UDP-N-acetylglucosamine--dolichyl-phosphate N-acetylglucosaminephosphotransferase (410 aa).

Residues 1–10 (MWAFPELPLP) lie on the Lumenal side of the membrane. A helical transmembrane segment spans residues 11-40 (LPLLVNLIGSLLGFVATVTLIPAFRSHFIA). The Cytoplasmic portion of the chain corresponds to 41-60 (ARLCGQDLNKLSQQQIPESQ). Residues 46–48 (QDL) and glutamate 58 contribute to the UDP-N-acetyl-alpha-D-glucosamine site. Residues 61–80 (GVISGAVFLIILFCFIPFPF) form a helical membrane-spanning segment. The Lumenal segment spans residues 81-93 (LNCFVEEQCKAFP). The helical transmembrane segment at 94-120 (HHEFVALIGALLAICCMIFLGFADDVL) threads the bilayer. The Cytoplasmic segment spans residues 121–123 (NLR). A helical membrane pass occupies residues 124-145 (WRHKLLLPTAASLPLLMVYFTN). Position 127 (lysine 127) interacts with dolichyl phosphate. Topologically, residues 146–168 (FGNTTIVVPKPFRWILGLHLDLG) are lumenal. Residue asparagine 148 is glycosylated (N-linked (GlcNAc...) asparagine). Residues 169 to 188 (ILYYVYMGLLAVFCTNAINI) traverse the membrane as a helical segment. 180–188 (VFCTNAINI) contacts dolichyl phosphate. Asparagine 187 is a binding site for Mg(2+). At 189-194 (LAGING) the chain is on the cytoplasmic side. A UDP-N-acetyl-alpha-D-glucosamine-binding site is contributed by asparagine 193. Residues 195 to 215 (LEAGQSLVISASIIVFNLVEL) traverse the membrane as a helical segment. Residues 216–220 (EGDYR) are Lumenal-facing. A helical transmembrane segment spans residues 221 to 244 (DDHIFSLYFMIPFFFTTLGLLYHN). At 245-252 (WYPSRVFV) the chain is on the cytoplasmic side. Residues 253 to 271 (GDTFCYFAGMTFAVVGILG) traverse the membrane as a helical segment. Position 254 (aspartate 254) interacts with Mg(2+). Over 272–273 (HF) the chain is Lumenal. A helical membrane pass occupies residues 274-295 (SKTMLLFFMPQVFNFLYSLPQL). At 296 to 377 (FHIIPCPRHR…LLLKVFGPIH (82 aa)) the chain is on the cytoplasmic side. 303-305 (RHR) lines the UDP-N-acetyl-alpha-D-glucosamine pocket. Residues 378–402 (ERNLTLLLLLLQVLSSAATFSIRYQ) traverse the membrane as a helical segment. The Lumenal portion of the chain corresponds to 403 to 410 (LVRLFYDV).

The protein belongs to the glycosyltransferase 4 family. As to quaternary structure, homodimer. The cofactor is Mg(2+).

Its subcellular location is the endoplasmic reticulum membrane. The catalysed reaction is a di-trans,poly-cis-dolichyl phosphate + UDP-N-acetyl-alpha-D-glucosamine = an N-acetyl-alpha-D-glucosaminyl-diphospho-di-trans,poly-cis-dolichol + UMP. It participates in protein modification; protein glycosylation. With respect to regulation, inhibited by natural nucleoside antibiotic tunicamycin, which acts as a structural analog and competitor of UDP-GlcNAc. In terms of biological role, UDP-N-acetylglucosamine--dolichyl-phosphate N-acetylglucosaminephosphotransferase that operates in the biosynthetic pathway of dolichol-linked oligosaccharides, the glycan precursors employed in protein asparagine (N)-glycosylation. The assembly of dolichol-linked oligosaccharides begins on the cytosolic side of the endoplasmic reticulum membrane and finishes in its lumen. The sequential addition of sugars to dolichol pyrophosphate produces dolichol-linked oligosaccharides containing fourteen sugars, including two GlcNAcs, nine mannoses and three glucoses. Once assembled, the oligosaccharide is transferred from the lipid to nascent proteins by oligosaccharyltransferases. Catalyzes the initial step of dolichol-linked oligosaccharide biosynthesis, transfering GlcNAc-1-P from cytosolic UDP-GlcNAc onto the carrier lipid dolichyl phosphate (P-dolichol), yielding GlcNAc-P-P-dolichol embedded in the cytoplasmic leaflet of the endoplasmic reticulum membrane. The chain is UDP-N-acetylglucosamine--dolichyl-phosphate N-acetylglucosaminephosphotransferase from Mus musculus (Mouse).